Consider the following 169-residue polypeptide: Succinate dehydrogenase cytochrome b560 subunit, mitochondrial (169 aa).

Residues 1–29 (MAALLLRHVGRHCLRAHLSPQLCIRNAVP) constitute a mitochondrion transit peptide. Over 30-62 (LGTTAKEEMERFWNKNLGSNRPLSPHITIYRWS) the chain is Mitochondrial matrix. Residues 63 to 92 (LPMAMSICHRGTGIALSAGVSLFGLSALLL) form a helical membrane-spanning segment. The Mitochondrial intermembrane segment spans residues 93-112 (PGNFESHLELVKSLCLGPTL). Residues 113-137 (IYTAKFGIVFPLMYHTWNGIRHLIW) traverse the membrane as a helical segment. H127 is a binding site for heme b. Residues 138 to 144 (DLGKGLT) lie on the Mitochondrial matrix side of the membrane. The helical transmembrane segment at 145–166 (IPQLTQSGVVVLILTVLSSVGL) threads the bilayer. The Mitochondrial intermembrane portion of the chain corresponds to 167 to 169 (AAM).

Belongs to the cytochrome b560 family. As to quaternary structure, component of complex II composed of four subunits: the flavoprotein (FP) SDHA, iron-sulfur protein (IP) SDHB, and a cytochrome b560 composed of SDHC and SDHD. The cofactor is heme b. Detected in heart muscle (at protein level).

It localises to the mitochondrion inner membrane. The protein operates within carbohydrate metabolism; tricarboxylic acid cycle. Its function is as follows. Membrane-anchoring subunit of succinate dehydrogenase (SDH) that is involved in complex II of the mitochondrial electron transport chain and is responsible for transferring electrons from succinate to ubiquinone (coenzyme Q). SDH also oxidizes malate to the non-canonical enol form of oxaloacetate, enol-oxaloacetate. Enol-oxaloacetate, which is a potent inhibitor of the succinate dehydrogenase activity, is further isomerized into keto-oxaloacetate. This chain is Succinate dehydrogenase cytochrome b560 subunit, mitochondrial (SDHC), found in Sus scrofa (Pig).